Here is a 306-residue protein sequence, read N- to C-terminus: D-alanine--D-alanine ligase (306 aa).

One can recognise an ATP-grasp domain in the interval 102–300 (KIIAANAGVC…YGDIVQWMVE (199 aa)). An ATP-binding site is contributed by 128-183 (PMEPPYVIKPVCEGSSFGVVIVQENEAVPPHNIGGSEWGYADEVMVEKYIPGRELT). Residues Asp-253, Glu-267, and Asn-269 each contribute to the Mg(2+) site.

This sequence belongs to the D-alanine--D-alanine ligase family. Mg(2+) is required as a cofactor. Requires Mn(2+) as cofactor.

Its subcellular location is the cytoplasm. The catalysed reaction is 2 D-alanine + ATP = D-alanyl-D-alanine + ADP + phosphate + H(+). The protein operates within cell wall biogenesis; peptidoglycan biosynthesis. Cell wall formation. The polypeptide is D-alanine--D-alanine ligase (Bartonella tribocorum (strain CIP 105476 / IBS 506)).